The following is a 33-amino-acid chain: Dermaseptin DS VIII-like peptide (33 aa).

Position 33 is an alanine amide (Ala33).

As to expression, expressed by the parotoid glands.

Its subcellular location is the secreted. Possesses a potent antimicrobial activity against bacteria, fungi and protozoa. Probably acts by disturbing membrane functions with its amphipathic structure. The polypeptide is Dermaseptin DS VIII-like peptide (Phyllomedusa burmeisteri (Brazilian common walking leaf frog)).